A 446-amino-acid chain; its full sequence is Probable glycine dehydrogenase (decarboxylating) subunit 1 (446 aa).

Belongs to the GcvP family. N-terminal subunit subfamily. In terms of assembly, the glycine cleavage system is composed of four proteins: P, T, L and H. In this organism, the P 'protein' is a heterodimer of two subunits.

The enzyme catalyses N(6)-[(R)-lipoyl]-L-lysyl-[glycine-cleavage complex H protein] + glycine + H(+) = N(6)-[(R)-S(8)-aminomethyldihydrolipoyl]-L-lysyl-[glycine-cleavage complex H protein] + CO2. Functionally, the glycine cleavage system catalyzes the degradation of glycine. The P protein binds the alpha-amino group of glycine through its pyridoxal phosphate cofactor; CO(2) is released and the remaining methylamine moiety is then transferred to the lipoamide cofactor of the H protein. This is Probable glycine dehydrogenase (decarboxylating) subunit 1 from Desulfitobacterium hafniense (strain DSM 10664 / DCB-2).